The sequence spans 464 residues: V-type ATP synthase beta chain (464 aa).

It belongs to the ATPase alpha/beta chains family.

Produces ATP from ADP in the presence of a proton gradient across the membrane. The V-type beta chain is a regulatory subunit. The polypeptide is V-type ATP synthase beta chain (Streptococcus gordonii (strain Challis / ATCC 35105 / BCRC 15272 / CH1 / DL1 / V288)).